Here is a 708-residue protein sequence, read N- to C-terminus: Polyribonucleotide nucleotidyltransferase (708 aa).

Mg(2+)-binding residues include D486 and D492. Positions 553-612 constitute a KH domain; it reads PRIIKFKINPEKIRDVIGKGGAVIRALTEETGTTIDISDDGSVTIACVSSEGGEQARKRI. The region spanning 622–690 is the S1 motif domain; that stretch reads GRIYEGTVLK…EKGRLRLSMK (69 aa).

Belongs to the polyribonucleotide nucleotidyltransferase family. It depends on Mg(2+) as a cofactor.

Its subcellular location is the cytoplasm. The enzyme catalyses RNA(n+1) + phosphate = RNA(n) + a ribonucleoside 5'-diphosphate. Functionally, involved in mRNA degradation. Catalyzes the phosphorolysis of single-stranded polyribonucleotides processively in the 3'- to 5'-direction. In Nitrosomonas europaea (strain ATCC 19718 / CIP 103999 / KCTC 2705 / NBRC 14298), this protein is Polyribonucleotide nucleotidyltransferase.